We begin with the raw amino-acid sequence, 223 residues long: Pyridoxine/pyridoxamine 5'-phosphate oxidase (223 aa).

Substrate is bound by residues 9-12 (RVGY) and K76. Residues 71–76 (RTVLCK), 86–87 (FT), K93, and Q115 each bind FMN. Substrate-binding residues include Y133, R137, and S141. FMN contacts are provided by residues 150-151 (QS) and W196. Position 202–204 (202–204 (RMH)) interacts with substrate. R206 is an FMN binding site.

The protein belongs to the pyridoxamine 5'-phosphate oxidase family. Homodimer. Requires FMN as cofactor.

It catalyses the reaction pyridoxamine 5'-phosphate + O2 + H2O = pyridoxal 5'-phosphate + H2O2 + NH4(+). It carries out the reaction pyridoxine 5'-phosphate + O2 = pyridoxal 5'-phosphate + H2O2. Its pathway is cofactor metabolism; pyridoxal 5'-phosphate salvage; pyridoxal 5'-phosphate from pyridoxamine 5'-phosphate: step 1/1. It functions in the pathway cofactor metabolism; pyridoxal 5'-phosphate salvage; pyridoxal 5'-phosphate from pyridoxine 5'-phosphate: step 1/1. Functionally, catalyzes the oxidation of either pyridoxine 5'-phosphate (PNP) or pyridoxamine 5'-phosphate (PMP) into pyridoxal 5'-phosphate (PLP). In Rhodococcus jostii (strain RHA1), this protein is Pyridoxine/pyridoxamine 5'-phosphate oxidase.